Here is a 397-residue protein sequence, read N- to C-terminus: Acetate kinase 2 (397 aa).

N10 lines the Mg(2+) pocket. K17 serves as a coordination point for ATP. R90 is a substrate binding site. D147 (proton donor/acceptor) is an active-site residue. Residues H207–G211, D281–R283, and G329–N333 each bind ATP. E385 is a Mg(2+) binding site.

Belongs to the acetokinase family. As to quaternary structure, homodimer. Mg(2+) is required as a cofactor. Mn(2+) serves as cofactor.

It is found in the cytoplasm. The catalysed reaction is acetate + ATP = acetyl phosphate + ADP. It participates in metabolic intermediate biosynthesis; acetyl-CoA biosynthesis; acetyl-CoA from acetate: step 1/2. Its function is as follows. Catalyzes the formation of acetyl phosphate from acetate and ATP. Can also catalyze the reverse reaction. The polypeptide is Acetate kinase 2 (Vibrio cholerae serotype O1 (strain ATCC 39315 / El Tor Inaba N16961)).